We begin with the raw amino-acid sequence, 305 residues long: Diacylglycerol kinase (305 aa).

The DAGKc domain occupies 1–132 (MRKRARIIYN…VDIGKMNSRY (132 aa)). Residues 10–14 (NPTSG), Thr41, 67–73 (GDGTLNE), and Thr94 each bind ATP. Residues Lys213, Asp216, and Tyr218 each contribute to the Mg(2+) site. Residue Glu273 is the Proton acceptor of the active site.

This sequence belongs to the diacylglycerol/lipid kinase family. Homodimer. It depends on Mg(2+) as a cofactor.

The catalysed reaction is a 1,2-diacyl-sn-glycerol + ATP = a 1,2-diacyl-sn-glycero-3-phosphate + ADP + H(+). Functionally, catalyzes the phosphorylation of diacylglycerol (DAG) into phosphatidic acid. Is a key enzyme involved in the production of lipoteichoic acid by reintroducing DAG formed from the breakdown of membrane phospholipids into the phosphatidylglycerol biosynthetic pathway. The polypeptide is Diacylglycerol kinase (dagK) (Staphylococcus saprophyticus subsp. saprophyticus (strain ATCC 15305 / DSM 20229 / NCIMB 8711 / NCTC 7292 / S-41)).